A 534-amino-acid polypeptide reads, in one-letter code: uncharacterized protein (534 aa).

4 disordered regions span residues methionine 1–glycine 93, serine 123–alanine 260, alanine 313–serine 349, and proline 383–proline 505. Residues glycine 35–glycine 45 are compositionally biased toward pro residues. Serine 87 and serine 123 each carry phosphoserine. A compositionally biased stretch (low complexity) spans arginine 145–glycine 161. Residues serine 230–arginine 239 are compositionally biased toward basic and acidic residues.

This is an uncharacterized protein from Bos taurus (Bovine).